Reading from the N-terminus, the 558-residue chain is Coiled-coil domain-containing protein 63 (558 aa).

The segment at 1 to 26 is disordered; sequence MPTKKHRRKDPESPQEPSEKTKEQLV. Over residues 9–26 the composition is skewed to basic and acidic residues; that stretch reads KDPESPQEPSEKTKEQLV. Coiled-coil stretches lie at residues 48-289 and 339-416; these read NFRS…KAKK and VTEL…VENL. Residues 531–558 are disordered; the sequence is HYATRESRNRDSMPEKGDELKSKKKVTV. Basic and acidic residues predominate over residues 533 to 551; it reads ATRESRNRDSMPEKGDELK.

Its function is as follows. Plays a role in spermiogenesis. Involved in the elongation of flagella and the formation of sperm heads. This chain is Coiled-coil domain-containing protein 63, found in Bos taurus (Bovine).